The chain runs to 315 residues: MHGHGGYDSDFSDDEQGGGSSKKRKKTVEDELLLTKPFQKEKYGKVAHKQVAADLLDREEARNRRFHLIAMDAYQRHTKFVNDYILYYGGKREDFKRLGENDKTDLDVIRENHRFLWNEEDEADMTWEKRLAKKYYDKLFKEYCIADLSRYKENKFGFRWRIEKEVISGKGQFFCGNKCCDEKEGLKSWEVNFGYTEHGEKRNALVKLRLCQECSFKLNFHHRRKEIKSTKKRSKTKTESDESPHKNSRSSSSEEASQGKDEGHSSSKRSEDSRNRNAGEEDSASDSELWKGPLPETDEKSQEEEFDDYFQDLFL.

An N-acetylmethionine modification is found at M1. The interval 1–28 (MHGHGGYDSDFSDDEQGGGSSKKRKKTV) is disordered. Phosphoserine occurs at positions 9 and 12. Position 36 is an N6-acetyllysine (K36). Basic residues predominate over residues 225–235 (KEIKSTKKRSK). Residues 225–308 (KEIKSTKKRS…EKSQEEEFDD (84 aa)) are disordered. Residues 236–245 (TKTESDESPH) show a composition bias toward basic and acidic residues. Phosphoserine is present on residues S251 and S252. Residues 257-279 (SQGKDEGHSSSKRSEDSRNRNAG) show a composition bias toward basic and acidic residues. Phosphoserine is present on residues S283 and S285.

As to quaternary structure, interacts with ESS2.

It localises to the nucleus. In terms of biological role, may be involved in pre-mRNA splicing. This Rattus norvegicus (Rat) protein is Protein FRA10AC1 homolog (Fra10ac1).